Here is a 133-residue protein sequence, read N- to C-terminus: MALQNLTPAPGSTHATKRLGRGQGSGNGKTAGKGNKGQRARKGYNEKRGFEGGQQPLQRRLPKVGFTSKFEKPYVINVEKITAIKELSEITVATIASVHKISKSVTKIKLIGVSAKELASKVKDENVSVSGSK.

The segment at 1 to 58 is disordered; sequence MALQNLTPAPGSTHATKRLGRGQGSGNGKTAGKGNKGQRARKGYNEKRGFEGGQQPLQ. The span at 21–35 shows a compositional bias: gly residues; sequence RGQGSGNGKTAGKGN.

Belongs to the universal ribosomal protein uL15 family. In terms of assembly, part of the 50S ribosomal subunit.

In terms of biological role, binds to the 23S rRNA. In Campylobacter curvus (strain 525.92), this protein is Large ribosomal subunit protein uL15.